The following is a 2197-amino-acid chain: Activating signal cointegrator 1 complex subunit 3 (2197 aa).

Position 12 is a phosphoserine (Ser-12). Coiled-coil stretches lie at residues 18-80 (KQDN…AKQI) and 328-356 (IQSE…KAGE). The Helicase ATP-binding 1 domain maps to 487–670 (DTAYNTNENM…FLHVNPYIGL (184 aa)). 500 to 507 (APTGAGKT) is a binding site for ATP. Lys-573 carries the post-translational modification N6-acetyllysine. The DEVH box signature appears at 612 to 615 (DEVH). The Helicase C-terminal 1 domain maps to 697 to 915 (QLNNMDEVCY…GTVTNVEEAV (219 aa)). The region spanning 979 to 1288 (STDLGRTASH…GAEAVCIINF (310 aa)) is the SEC63 1 domain. In terms of domain architecture, Helicase ATP-binding 2 spans 1337-1512 (HTLYHTDCNV…WLNIKQMGLF (176 aa)). 1350-1357 (APTGSGKT) lines the ATP pocket. The DEIH box motif lies at 1454–1457 (DEIH). Residues 1565-1739 (RMLSSMTKLE…VLSDHLNAEI (175 aa)) enclose the Helicase C-terminal 2 domain. The 364-residue stretch at 1812–2175 (PLTCGRIASY…YLGLDQQYDI (364 aa)) folds into the SEC63 2 domain.

It belongs to the helicase family. Identified in the ASCC complex that contains ASCC1, ASCC2 and ASCC3. Functions as a scaffolding subunit that interacts directly with both ASCC1 and ASCC2. Interacts directly with ALKBH3, and thereby recruits ALKBH3 to the ASCC complex. Part of the ASC-1/TRIP4 complex, that contains TRIP4, ASCC1, ASCC2 and ASCC3. Part of the RQT (ribosome quality control trigger) complex, that contains ASCC2, ASCC3 and TRIP4. Associates with ribosomes; recruited to collided ribosomes. Interacts with ZCCHC4. Interacts with ZNF598. Interacts with RPS3.

The protein localises to the nucleus. It is found in the nucleus speckle. Its subcellular location is the cytoplasm. The protein resides in the cytosol. The enzyme catalyses Couples ATP hydrolysis with the unwinding of duplex DNA by translocating in the 3'-5' direction.. It catalyses the reaction ATP + H2O = ADP + phosphate + H(+). Functionally, ATPase involved both in DNA repair and rescue of stalled ribosomes. 3'-5' DNA helicase involved in repair of alkylated DNA: promotes DNA unwinding to generate single-stranded substrate needed for ALKBH3, enabling ALKBH3 to process alkylated N3-methylcytosine (3mC) within double-stranded regions. Also involved in activation of the ribosome quality control (RQC) pathway, a pathway that degrades nascent peptide chains during problematic translation. Drives the splitting of stalled ribosomes that are ubiquitinated in a ZNF598-dependent manner, as part of the ribosome quality control trigger (RQT) complex. Part of the ASC-1 complex that enhances NF-kappa-B, SRF and AP1 transactivation. The polypeptide is Activating signal cointegrator 1 complex subunit 3 (Ascc3) (Rattus norvegicus (Rat)).